Here is a 37-residue protein sequence, read N- to C-terminus: Natriuretic peptide PNP (37 aa).

C14 and C30 form a disulfide bridge.

As to expression, expressed by the venom gland.

The protein localises to the secreted. Functionally, increases urine flow and decreases blood pressure when administered to rats by intravenous injection. Inhibits thrombin-induced platelet aggregation. Stimulates cGMP production via the natriuretic peptide receptor-A (NPR1). The polypeptide is Natriuretic peptide PNP (Pseudocerastes persicus (Persian horned viper)).